The sequence spans 280 residues: Endochitinase A (280 aa).

Positions 1 to 25 (MANAPRILALGLLALLCAAAGPAAA) are cleaved as a signal peptide. Residues 26–60 (QNCGCQPNFCCSKFGYCGTTDAYCGDGCQSGPCRS) form the Chitin-binding type-1 domain. 4 disulfides stabilise this stretch: cysteine 28–cysteine 36, cysteine 30–cysteine 42, cysteine 35–cysteine 49, and cysteine 53–cysteine 58. Positions 61–77 (GGGGGGGGGGGGGGSGG) are hinge region (poly-Gly). The catalytic stretch occupies residues 78–280 (ANVANVVTDA…RVDPGPNLTC (203 aa)). A disulfide bridge links cysteine 100 with cysteine 149. Glutamate 144 functions as the Proton donor in the catalytic mechanism. The N-linked (GlcNAc...) asparagine glycan is linked to asparagine 155. 2 disulfide bridges follow: cysteine 161/cysteine 170 and cysteine 248/cysteine 280. N-linked (GlcNAc...) asparagine glycosylation is present at asparagine 277.

The protein belongs to the glycosyl hydrolase 19 family. Chitinase class IV subfamily.

The protein localises to the secreted. The enzyme catalyses Random endo-hydrolysis of N-acetyl-beta-D-glucosaminide (1-&gt;4)-beta-linkages in chitin and chitodextrins.. Inactivated by l-ethyl-3-(3-dimethylaminopropyl)carbodiimide (EDC) in the absence of exogenous nucleophiles (e.g. GlcNAc4, GlcNAc3 and GlcNAc2). Not inhibited by tetra-N-acetylchitopentaose or modified chitotetraose substrate TMG-chitotriomycin-pMP, containing a free, non-acetylated glucosaminyl residue or a N-trimethylamino glucosamine (TMG) residue at the non-reducing terminus, respectively. Functionally, defense against chitin-containing fungal pathogens. Hydrolyzes glycol chitin and tetra-N-acetylchitotetraose in vitro. Its action is countered by fungal polyglycine hydrolases and fungalysin, that cleave the chitin-binding domain from the protein. The polypeptide is Endochitinase A (Zea mays (Maize)).